The primary structure comprises 60 residues: Mating pheromone En-2 (60 aa).

Disulfide bonds link cysteine 11–cysteine 39, cysteine 24–cysteine 35, cysteine 31–cysteine 57, and cysteine 36–cysteine 48.

The protein localises to the secreted. Functionally, mating ciliate pheromones (or gamones) are diffusible extracellular communication signals that distinguish different intraspecific classes of cells commonly referred to as 'mating types'. They prepare the latter for conjugation by changing their cell surface properties. The protein is Mating pheromone En-2 of Euplotes nobilii (Ciliate).